The following is a 262-amino-acid chain: MKFFNWMQNKLGGKQENRKSNTSTSTTYAKPEPREEFSDWPHSLLAIGTFGNNNEITQNIENQNTQQEDPSSSEEVPDFTPEEIGKLQKELTRLLRRKPNVEKEISELPLDRFLNCPSSLEVDRRISNALCSESGGDKDEDIEKTLSVILDKCKDICAEKSKKSIGKKSISFLLKKMFVCRSGFAPTPSLRDTLQESRMEKLLRTMLHKKLYTQNNSRAPVLKKCLENKKSIKKRNEDEAEERIDEGSKWVKTDSEYIVLEI.

A disordered region spans residues 1–40; sequence MKFFNWMQNKLGGKQENRKSNTSTSTTYAKPEPREEFSDW. The IGT motif signature appears at 43-49; sequence SLLAIGT.

This sequence belongs to the LAZY family.

Its function is as follows. Involved in the control of root gravitropism. The sequence is that of Protein NEGATIVE GRAVITROPIC RESPONSE OF ROOTS from Medicago truncatula (Barrel medic).